The sequence spans 403 residues: MSKESRTLQAIKFDRQNVTLDILDQLVLPYSTTYISIKSIDDAYNAIKSMQVRGAPAIAIVGAFAIVVDIYNNLKSKDGNSSIGDLQTSLQHLLRSRPTAVNLANAINDIEQILCSYETSEVLNESIYKQIFDYATRLYDDDLANNHKIGENGLKYIVESLKQENFKGPFSIITICNTGSLATSGHGTALGIIRSTYAKLHKEVSGEDFFLDHVYPCETRPYNQGAKLTTYELDYEKIPFTLICDNMVSSLIQTLKNEKKDVHGKTSPVKFIIVGADRIVRNGDAANKIGTFQLATIAQYFNSAQDTKIKFIVAAPRTTIDLNTETGDEIKIEERPHKELTTLVGPVLNGLEVGDKITVGIATPGITVWNPAFDVTPHGLIDSIITEDPIAYVKDKNGNYNLT.

The active-site Proton donor is the aspartate 277.

Belongs to the eIF-2B alpha/beta/delta subunits family. MtnA subfamily.

It localises to the cytoplasm. The protein resides in the nucleus. The catalysed reaction is 5-(methylsulfanyl)-alpha-D-ribose 1-phosphate = 5-(methylsulfanyl)-D-ribulose 1-phosphate. It functions in the pathway amino-acid biosynthesis; L-methionine biosynthesis via salvage pathway; L-methionine from S-methyl-5-thio-alpha-D-ribose 1-phosphate: step 1/6. Its function is as follows. Catalyzes the interconversion of methylthioribose-1-phosphate (MTR-1-P) into methylthioribulose-1-phosphate (MTRu-1-P). The sequence is that of Methylthioribose-1-phosphate isomerase from Lodderomyces elongisporus (strain ATCC 11503 / CBS 2605 / JCM 1781 / NBRC 1676 / NRRL YB-4239) (Yeast).